The primary structure comprises 96 residues: MEQAPEDQGPQREPYNEWALELLEELKQEAVRHFPRPWLHNLGQYIYETYGDTWSGVEALIRTLQQLMFIHFRIGCQHSRIGILRQRRARNGASRS.

The segment at 1–42 (MEQAPEDQGPQREPYNEWALELLEELKQEAVRHFPRPWLHNL) is homooligomerization. Phosphoserine; by host occurs at positions 79, 94, and 96.

Belongs to the HIV-1 VPR protein family. Homooligomer, may form homodimer. Interacts with p6-gag region of the Pr55 Gag precursor protein through a (Leu-X-X)4 motif near the C-terminus of the P6gag protein. Interacts with host UNG. May interact with host RAD23A/HHR23A. Interacts with host VPRBP/DCAF1, leading to hijack the CUL4A-RBX1-DDB1-DCAF1/VPRBP complex, mediating ubiquitination of host proteins such as TERT and ZGPAT and arrest of the cell cycle in G2 phase. Phosphorylated on several residues by host. These phosphorylations regulate VPR activity for the nuclear import of the HIV-1 pre-integration complex.

It is found in the virion. It localises to the host nucleus. Its subcellular location is the host extracellular space. Functionally, during virus replication, may deplete host UNG protein, and incude G2-M cell cycle arrest. Acts by targeting specific host proteins for degradation by the 26S proteasome, through association with the cellular CUL4A-DDB1 E3 ligase complex by direct interaction with host VPRPB/DCAF-1. Cell cycle arrest reportedly occurs within hours of infection and is not blocked by antiviral agents, suggesting that it is initiated by the VPR carried into the virion. Additionally, VPR induces apoptosis in a cell cycle dependent manner suggesting that these two effects are mechanistically linked. Detected in the serum and cerebrospinal fluid of AIDS patient, VPR may also induce cell death to bystander cells. Its function is as follows. During virus entry, plays a role in the transport of the viral pre-integration (PIC) complex to the host nucleus. This function is crucial for viral infection of non-dividing macrophages. May act directly at the nuclear pore complex, by binding nucleoporins phenylalanine-glycine (FG)-repeat regions. The protein is Protein Vpr of Homo sapiens (Human).